The following is a 229-amino-acid chain: Protein AF_2251 (229 aa).

It belongs to the CinA family.

The sequence is that of Protein AF_2251 from Archaeoglobus fulgidus (strain ATCC 49558 / DSM 4304 / JCM 9628 / NBRC 100126 / VC-16).